The following is a 275-amino-acid chain: Catechol 1,2-dioxygenase 2 (275 aa).

Fe cation is bound by residues tyrosine 158, tyrosine 192, histidine 216, and histidine 218.

Belongs to the intradiol ring-cleavage dioxygenase family. Homodimer. Fe(3+) serves as cofactor.

The enzyme catalyses catechol + O2 = cis,cis-muconate + 2 H(+). It participates in aromatic compound metabolism; beta-ketoadipate pathway; 5-oxo-4,5-dihydro-2-furylacetate from catechol: step 1/3. Functionally, can cleave 4-methyl-, 4-chloro-, and 3-methoxycatechol at lower rates than catechol, but has no activity with 4-nitrocatechol or protocatechuic acid. In Acinetobacter lwoffii, this protein is Catechol 1,2-dioxygenase 2 (catA2).